The chain runs to 1203 residues: Potassium/sodium hyperpolarization-activated cyclic nucleotide-gated channel 4 (1203 aa).

The disordered stretch occupies residues 1 to 182 (MDKLPPSMRK…QPASASCEQP (182 aa)). At 1–263 (MDKLPPSMRK…IIHPYSDFRF (263 aa)) the chain is on the cytoplasmic side. Acidic residues predominate over residues 26–36 (MDEEEDAEEEG). Over residues 105 to 117 (SRGGGSGGTGSGS) the composition is skewed to gly residues. Positions 121-133 (HLHDSAEERRLIA) are enriched in basic and acidic residues. A Phosphoserine modification is found at Ser138. Residues 163 to 174 (ASPPPPQQPPQP) are compositionally biased toward pro residues. The interval 209 to 260 (GQAGFMQRQFGAMLQPGVNKFSLRMFGSQKAVEREQERVKSAGFWIIHPYSD) is involved in subunit assembly. Residues 264 to 286 (YWDLTMLLLMVGNLIIIPVGITF) traverse the membrane as a helical segment. At 287–293 (FKDENTT) the chain is on the extracellular side. A helical membrane pass occupies residues 294–314 (PWIVFNVVSDTFFLIDLVLNF). Topologically, residues 315–336 (RTGIVVEDNTEIILDPQRIKMK) are cytoplasmic. A helical transmembrane segment spans residues 337–359 (YLKSWFMVDFISSIPVDYIFLIV). Residues 360–378 (ETRIDSEVYKTARALRIVR) lie on the Extracellular side of the membrane. The helical; Voltage-sensor transmembrane segment at 379 to 399 (FTKILSLLRLLRLSRLIRYIH) threads the bilayer. Topologically, residues 400 to 413 (QWEEIFHMTYDLAS) are cytoplasmic. A helical transmembrane segment spans residues 414-436 (AVVRIVNLIGMMLLLCHWDGCLQ). The Extracellular portion of the chain corresponds to 437 to 464 (FLVPMLQDFPDDCWVSINNMVNNSWGKQ). A glycan (N-linked (GlcNAc...) asparagine) is linked at Asn458. An intramembrane region (pore-forming) is located at residues 465 to 486 (YSYALFKAMSHMLCIGYGRQAP). Residues 487-491 (VGMSD) are Extracellular-facing. The chain crosses the membrane as a helical span at residues 492-517 (VWLTMLSMIVGATCYAMFIGHATALI). Topologically, residues 518–1203 (QSLDSSRRQY…PVRSKLPSNL (686 aa)) are cytoplasmic. 3',5'-cyclic GMP is bound by residues Tyr559, Lys562, Phe564, and Glu566. Residues Gly659, Glu660, Cys662, Arg669, Thr670, Val673, and Arg710 each contribute to the 3',5'-cyclic AMP site. 3 disordered regions span residues 836–856 (ALGS…SSSS), 870–897 (GLSP…TPSA), and 918–1203 (LSSS…PSNL). Low complexity-rich tracts occupy residues 918–941 (LSSS…AAQP) and 966–986 (RSPS…SLGL). The segment covering 995-1004 (ETPPRQPEPP) has biased composition (pro residues). Residues 1005–1028 (SLVAGASGGASPVGFTPRGGLSPP) show a composition bias toward low complexity. Positions 1029–1042 (GHSPGPPRTFPSAP) are enriched in pro residues. Over residues 1045-1056 (ASGSHGSLLLPP) the composition is skewed to low complexity. Phosphoserine occurs at positions 1105 and 1108. Positions 1122-1137 (AGGGSGGSGSSGGLGP) are enriched in gly residues.

Belongs to the potassium channel HCN family. In terms of assembly, homotetramer. The channel assemble into homotetramers or heteromeric complexes that contains of four pore-forming subunits. Interacts with PEX5L with a 4:4 HCN4:PEX5L stoichiometry; reduces the effects of cAMP on the voltage-dependence and rate of activation. Interacts with IRAG1; regulates HCN4 channel activity. Interacts with IRAG2; regulates HCN4 channel activity. Post-translationally, S-palmitoylated. In terms of tissue distribution, highly expressed in thalamus, testis and in heart, both in ventricle and atrium. Detected at much lower levels in amygdala, substantia nigra, cerebellum and hippocampus.

The protein resides in the cell membrane. It carries out the reaction K(+)(in) = K(+)(out). The catalysed reaction is Na(+)(in) = Na(+)(out). Activated by cAMP and to a lesser extent by cGMP and cCMP. cAMP binding causes a conformation change that leads to the assembly of an active tetramer and channel opening. Binding of cAMP removes a tonic inhibition conferred by cyclic nucleotide-binding domain (CNBD) on channel opening. Cyclic dinucleotides can modulate HCN4 channel; cyclic dinucleotides acting as potent antagonists of cAMP. Inhibited by extracellular Cs(+) ions. Auxiliary subunits can also regulate HCN4 channel. IRAG1 causes a gain-of-function by shifting HCN4 activation to more depolarized membrane potentials in the absence of cAMP. In contrast, IRAG2 causes a loss-of-function by inhibiting cAMP-dependent potentiation of HCN4 activation. Its function is as follows. Hyperpolarization-activated ion channel that are permeable to Na(+) and K(+) ions with very slow activation and inactivation. Exhibits higher selectivity for K(+) over Na(+) ions. Contributes to the native pacemaker currents in heart (If) that regulate the rhythm of heart beat. Contributes to the native pacemaker currents in neurons (Ih). May mediate responses to sour stimuli. This is Potassium/sodium hyperpolarization-activated cyclic nucleotide-gated channel 4 from Homo sapiens (Human).